The sequence spans 612 residues: Baculoviral IAP repeat-containing protein 2 (612 aa).

The stretch at 46–113 is one BIR 1 repeat; that stretch reads ELYRMSTYSA…RQFYPSCSFV (68 aa). Residue R143 is modified to Omega-N-methylarginine. A Phosphoserine modification is found at S153. BIR repeat units lie at residues 177 to 243 and 262 to 329; these read EEAR…CPFL and HSAR…CEFL. Residues C299, C302, H319, and C326 each contribute to the Zn(2+) site. The 91-residue stretch at 447–537 folds into the CARD domain; it reads MASGDLSLIR…TLYENLFVEK (91 aa). Residues 565-600 form an RING-type zinc finger; the sequence is CKVCMDREVSIVFIPCGHLVVCQECAPSLRKCPICR.

The protein belongs to the IAP family. In terms of assembly, interacts with DIABLO/SMAC and with PRSS25; these interactions inhibit apoptotic suppressor activity. Interacts with CASP9. Interacts (via BIR domains) with TRAF2; the interaction is required for IKBKE ubiquitination. Interacts with E2F1, RIPK1, RIPK2, RIPK3, RIPK4, BIRC5/survivin and USP19. Interacts with HSP90AB1. Interacts with several death receptors, inclusing FAS, TNFRSF10A and TNFRSF10B. Recruited to TNFRSF10B in the absence of receptor stimulation. When TNFRSF10B is stimulated, further recruited to the receptor and cleaved by caspases. Proteolytic fragments remain associated with TNFRSF10B. Post-translationally, auto-ubiquitinated and degraded by the proteasome in apoptotic cells. Upon stimulation of death receptors, including TNFRSF10B, recruited to receptors and cleaved by caspases. Proteolytic fragments remain associated with the receptors. This cleavage presumably inactivates the protein. In terms of tissue distribution, expressed in heart, brain, spleen, lung, liver, skeletal muscle, kidney and testis.

Its subcellular location is the cytoplasm. It localises to the nucleus. The enzyme catalyses S-ubiquitinyl-[E2 ubiquitin-conjugating enzyme]-L-cysteine + [acceptor protein]-L-lysine = [E2 ubiquitin-conjugating enzyme]-L-cysteine + N(6)-ubiquitinyl-[acceptor protein]-L-lysine.. The CARD domain inhibits the activation of E3 ubiquitin ligase activity by preventing RING domain dimerization and E2 ubiquitin donor binding and activation. The CARD domain-mediated autoinhibition of the E3 ubiquitin-protein ligase activity suppresses cell proliferation and migration. USP19 regulates the stability of BIRC2/c-IAP1 by preventing its ubiquitination. Functionally, multi-functional protein which regulates not only caspases and apoptosis, but also modulates inflammatory signaling and immunity, mitogenic kinase signaling, and cell proliferation, as well as cell invasion and metastasis. Acts as an E3 ubiquitin-protein ligase regulating NF-kappa-B signaling and regulates both canonical and non-canonical NF-kappa-B signaling by acting in opposite directions: acts as a positive regulator of the canonical pathway and suppresses constitutive activation of non-canonical NF-kappa-B signaling. The target proteins for its E3 ubiquitin-protein ligase activity include: RIPK1, RIPK2, RIPK3, RIPK4, CASP3, CASP7, CASP8, TRAF2, DIABLO/SMAC, MAP3K14/NIK, MAP3K5/ASK1, IKBKG/NEMO, IKBKE and MXD1/MAD1. Can also function as an E3 ubiquitin-protein ligase of the NEDD8 conjugation pathway, targeting effector caspases for neddylation and inactivation. Acts as an important regulator of innate immune signaling via regulation of Toll-like receptors (TLRs), Nodlike receptors (NLRs) and RIG-I like receptors (RLRs), collectively referred to as pattern recognition receptors (PRRs). Protects cells from spontaneous formation of the ripoptosome, a large multi-protein complex that has the capability to kill cancer cells in a caspase-dependent and caspase-independent manner. Suppresses ripoptosome formation by ubiquitinating RIPK1 and CASP8. Can stimulate the transcriptional activity of E2F1. Plays a role in the modulation of the cell cycle. The sequence is that of Baculoviral IAP repeat-containing protein 2 (Birc2) from Mus musculus (Mouse).